Consider the following 330-residue polypeptide: ADP-L-glycero-D-manno-heptose-6-epimerase (330 aa).

Residues Phe11 to Ile12, Asp32 to Asn33, Lys39, Lys54, Glu75 to Ser79, and Asn92 contribute to the NADP(+) site. Residue Tyr139 is the Proton acceptor of the active site. Lys143 is a binding site for NADP(+). Asn168 provides a ligand contact to substrate. NADP(+)-binding residues include Val169 and Lys177. Catalysis depends on Lys177, which acts as the Proton acceptor. Substrate is bound by residues Arg179, His186, Phe200–Tyr203, Arg213, and Tyr292.

Belongs to the NAD(P)-dependent epimerase/dehydratase family. HldD subfamily. Homopentamer. The cofactor is NADP(+).

It carries out the reaction ADP-D-glycero-beta-D-manno-heptose = ADP-L-glycero-beta-D-manno-heptose. It participates in nucleotide-sugar biosynthesis; ADP-L-glycero-beta-D-manno-heptose biosynthesis; ADP-L-glycero-beta-D-manno-heptose from D-glycero-beta-D-manno-heptose 7-phosphate: step 4/4. Functionally, catalyzes the interconversion between ADP-D-glycero-beta-D-manno-heptose and ADP-L-glycero-beta-D-manno-heptose via an epimerization at carbon 6 of the heptose. The protein is ADP-L-glycero-D-manno-heptose-6-epimerase of Paraburkholderia phymatum (strain DSM 17167 / CIP 108236 / LMG 21445 / STM815) (Burkholderia phymatum).